The primary structure comprises 211 residues: Large ribosomal subunit protein uL3 (211 aa).

Residues 130–139 (QDATHGNSLS) are compositionally biased toward polar residues. Positions 130–151 (QDATHGNSLSHRAPGSIGQNQT) are disordered. Gln-150 bears the N5-methylglutamine mark.

Belongs to the universal ribosomal protein uL3 family. Part of the 50S ribosomal subunit. Forms a cluster with proteins L14 and L19. Methylated by PrmB.

Functionally, one of the primary rRNA binding proteins, it binds directly near the 3'-end of the 23S rRNA, where it nucleates assembly of the 50S subunit. This is Large ribosomal subunit protein uL3 from Alcanivorax borkumensis (strain ATCC 700651 / DSM 11573 / NCIMB 13689 / SK2).